Consider the following 254-residue polypeptide: MNDTLAITYSTPARLSEAEKLARQMKLPLVSLNSTDYSFLLVFTPAHLELRSTGTKAPGPLYVDFLKGATAHRRLFGGGRSQLIVRAVGLKSHPHPTILDLTAGLGRDAFVLANFGCDVLMIERNPVIALLLRDGLERAQSVEWFKSLKLELIEIDAQIYLSTLKKQFDVIYMDPMYPIRKKSALVKKEMRILRRLVGADDDAPQLLALALKKAKHRVVIKRPLLSNPLPGPAPDVVYEGKSSRFDVYLLKPSS.

S-adenosyl-L-methionine contacts are provided by residues Arg-107–Asp-108, Glu-123–Arg-124, and Asp-174.

The protein belongs to the methyltransferase superfamily. RsmJ family.

Its subcellular location is the cytoplasm. The enzyme catalyses guanosine(1516) in 16S rRNA + S-adenosyl-L-methionine = N(2)-methylguanosine(1516) in 16S rRNA + S-adenosyl-L-homocysteine + H(+). Specifically methylates the guanosine in position 1516 of 16S rRNA. The protein is Ribosomal RNA small subunit methyltransferase J of Coxiella burnetii (strain Dugway 5J108-111).